The sequence spans 610 residues: MPEYRSKTSTYGRNMAGARALWRATGMKDDDFQKPIIAIANSFTQFVPGHVHLKDLGQLVAREIERLGGVAKEFNTIAVDDGIAMGHDGMLYSLPSREIIADSVEYMANAHCADALVCISNCDKITPGMLMASLRLNIPTVFVSGGPMEAGKTTLADHKLDLVDAMVLAADPHASDEEVATVERSACPTCGSCSGMFTANSMNCLTEALGLSLPGNGTVVATHSDRKQLFLNAGRTVIELCHRWYGAEDATALPRGIATFAAFENAITLDIAMGGSTNTILHLLAAAQEAEVSFTMQDIDRLSRNVPQLCKVAPNTQKYHIEDVHRAGGIFGILAELARGNLLHTDVATVHSKTLGEAIATWDIIGTQDEAVHTFYKAGSAGIPTQVAFSQSTRWPSLDTDRTEGCIRDMEHAFSKEGGLAVLYGNIAQDGCVVKTAGVDASIHVFEGSALVYESQEAAVKGILSDEVQPGMIVVIRYEGPKGGPGMQEMLYPTSYLKSKGLGKQCALFTDGRFSGGTSGLSIGHASPEAAAGGAIGLIRDGDRIRIDIPQRAINVLISEEELASRRLEQHAIGWKPAQSRTRKVSSALKAYALLATSADKGAVRNKTLL.

Asp-81 is a Mg(2+) binding site. Position 122 (Cys-122) interacts with [2Fe-2S] cluster. Asp-123 and Lys-124 together coordinate Mg(2+). Lys-124 is modified (N6-carboxylysine). A [2Fe-2S] cluster-binding site is contributed by Cys-193. Glu-489 is a Mg(2+) binding site. Ser-515 (proton acceptor) is an active-site residue.

It belongs to the IlvD/Edd family. In terms of assembly, homodimer. [2Fe-2S] cluster is required as a cofactor. Requires Mg(2+) as cofactor.

The catalysed reaction is (2R)-2,3-dihydroxy-3-methylbutanoate = 3-methyl-2-oxobutanoate + H2O. It catalyses the reaction (2R,3R)-2,3-dihydroxy-3-methylpentanoate = (S)-3-methyl-2-oxopentanoate + H2O. Its pathway is amino-acid biosynthesis; L-isoleucine biosynthesis; L-isoleucine from 2-oxobutanoate: step 3/4. It participates in amino-acid biosynthesis; L-valine biosynthesis; L-valine from pyruvate: step 3/4. Functionally, functions in the biosynthesis of branched-chain amino acids. Catalyzes the dehydration of (2R,3R)-2,3-dihydroxy-3-methylpentanoate (2,3-dihydroxy-3-methylvalerate) into 2-oxo-3-methylpentanoate (2-oxo-3-methylvalerate) and of (2R)-2,3-dihydroxy-3-methylbutanoate (2,3-dihydroxyisovalerate) into 2-oxo-3-methylbutanoate (2-oxoisovalerate), the penultimate precursor to L-isoleucine and L-valine, respectively. The chain is Dihydroxy-acid dehydratase from Xylella fastidiosa (strain M23).